The sequence spans 258 residues: Small ribosomal subunit protein uS2 (258 aa).

The segment at 222–258 (GKALRDQDEAEQVEPVSQEEKDEVVAEAMSEADFEEQ) is disordered.

The protein belongs to the universal ribosomal protein uS2 family.

The chain is Small ribosomal subunit protein uS2 from Campylobacter fetus subsp. fetus (strain 82-40).